Reading from the N-terminus, the 466-residue chain is Uronate isomerase (466 aa).

The protein belongs to the metallo-dependent hydrolases superfamily. Uronate isomerase family.

The catalysed reaction is D-glucuronate = D-fructuronate. It carries out the reaction aldehydo-D-galacturonate = keto-D-tagaturonate. Its pathway is carbohydrate metabolism; pentose and glucuronate interconversion. The sequence is that of Uronate isomerase from Brucella suis (strain ATCC 23445 / NCTC 10510).